The chain runs to 561 residues: Arginine--tRNA ligase (561 aa).

Positions 129–139 (ANPTGPLHVGH) match the 'HIGH' region motif.

The protein belongs to the class-I aminoacyl-tRNA synthetase family. In terms of assembly, monomer.

The protein localises to the cytoplasm. The catalysed reaction is tRNA(Arg) + L-arginine + ATP = L-arginyl-tRNA(Arg) + AMP + diphosphate. This is Arginine--tRNA ligase from Polaromonas sp. (strain JS666 / ATCC BAA-500).